The following is a 202-amino-acid chain: MSGSGSRPGDSRPGDSRPGDSRPGVRIGVDVGSVRVGVAASDPGGVLAVPVTTLARDRRGNADIDQLVLIVRERQAVEVVVGLPRQMSGQEGRAVRLVRQYAEVLAERIAPVPVRFVDERLTTVAAHRRMAERGVRSRARRSLVDQEAAVQILQHDLDSRRGSAAPGVIGCAAPAAGPDGVVRAPRDGPRAPDGVVPPSDER.

Disordered stretches follow at residues 1–27 (MSGS…GVRI) and 170–202 (GCAA…SDER). Residues 9-20 (GDSRPGDSRPGD) are compositionally biased toward basic and acidic residues.

The protein belongs to the YqgF nuclease family.

The protein resides in the cytoplasm. In terms of biological role, could be a nuclease involved in processing of the 5'-end of pre-16S rRNA. The polypeptide is Putative pre-16S rRNA nuclease (Frankia casuarinae (strain DSM 45818 / CECT 9043 / HFP020203 / CcI3)).